A 473-amino-acid chain; its full sequence is 3-isopropylmalate dehydratase large subunit (473 aa).

Positions 289 to 319 are disordered; that stretch reads TVTWGTTPGQTAGITEPIPDPDDLPEEDRDT. Residues 291 to 301 show a composition bias toward polar residues; the sequence is TWGTTPGQTAG. Residues 307–317 show a composition bias toward acidic residues; the sequence is PDPDDLPEEDR. [4Fe-4S] cluster-binding residues include Cys348, Cys408, and Cys411.

This sequence belongs to the aconitase/IPM isomerase family. LeuC type 1 subfamily. In terms of assembly, heterodimer of LeuC and LeuD. Requires [4Fe-4S] cluster as cofactor.

It catalyses the reaction (2R,3S)-3-isopropylmalate = (2S)-2-isopropylmalate. It functions in the pathway amino-acid biosynthesis; L-leucine biosynthesis; L-leucine from 3-methyl-2-oxobutanoate: step 2/4. Catalyzes the isomerization between 2-isopropylmalate and 3-isopropylmalate, via the formation of 2-isopropylmaleate. The polypeptide is 3-isopropylmalate dehydratase large subunit (Halorubrum lacusprofundi (strain ATCC 49239 / DSM 5036 / JCM 8891 / ACAM 34)).